We begin with the raw amino-acid sequence, 348 residues long: uncharacterized protein (348 aa).

This is an uncharacterized protein from Geobacillus kaustophilus (strain HTA426).